The primary structure comprises 432 residues: uncharacterized protein (432 aa).

This is an uncharacterized protein from Methanocaldococcus jannaschii (strain ATCC 43067 / DSM 2661 / JAL-1 / JCM 10045 / NBRC 100440) (Methanococcus jannaschii).